A 126-amino-acid polypeptide reads, in one-letter code: Protein ApaG (126 aa).

Residues 2-126 enclose the ApaG domain; it reads ADKLYQMEVQ…MTLVAPRVLH (125 aa).

The sequence is that of Protein ApaG from Chromobacterium violaceum (strain ATCC 12472 / DSM 30191 / JCM 1249 / CCUG 213 / NBRC 12614 / NCIMB 9131 / NCTC 9757 / MK).